The primary structure comprises 163 residues: Glycine cleavage system H-like protein gcvH5, mitochondrial (163 aa).

The N-terminal 23 residues, 1–23 (MFLFKTTNNLRKSLSNKFFCTRY), are a transit peptide targeting the mitochondrion. One can recognise a Lipoyl-binding domain in the interval 50–136 (IGTLGLTENG…MSKGWLCKIK (87 aa)).

This sequence belongs to the GcvH family.

Its subcellular location is the mitochondrion. The chain is Glycine cleavage system H-like protein gcvH5, mitochondrial (gcvH5) from Dictyostelium discoideum (Social amoeba).